Here is a 148-residue protein sequence, read N- to C-terminus: Gastrin-releasing peptide (148 aa).

The signal sequence occupies residues 1-23 (MRGRELPLVLLALVLCLAPRGRA). Position 50 is a methionine amide (methionine 50). The propeptide occupies 54–148 (STGESSSVSE…EGRNPQLNQQ (95 aa)). A disordered region spans residues 89-148 (EAKENRNHQPPQPKALGNQQPSWDSEDSSNFKDVGSKGKVGRLSAPGSQREGRNPQLNQQ).

This sequence belongs to the bombesin/neuromedin-B/ranatensin family.

Its subcellular location is the secreted. The protein localises to the cytoplasmic vesicle. It localises to the secretory vesicle lumen. It is found in the cell projection. The protein resides in the neuron projection. In terms of biological role, stimulates the release of gastrin and other gastrointestinal hormones. Contributes to the perception of prurient stimuli and to the transmission of itch signals in the spinal cord that promote scratching behavior. Contributes primarily to nonhistaminergic itch sensation. In one study, shown to act in the amygdala as part of an inhibitory network which inhibits memory specifically related to learned fear. In another study, shown to act on vasoactive intestinal peptide (VIP)-expressing cells in the auditory cortex, most likely via extrasynaptic diffusion from local and long-range sources, to mediate disinhibition of glutamatergic cells via VIP cell-specific GRPR signaling which leads to enhanced auditory fear memories. Contributes to the regulation of food intake. Inhibits voltage-gated sodium channels but enhances voltage-gated potassium channels in hippocampal neurons. Induces sighing by acting directly on the pre-Botzinger complex, a cluster of several thousand neurons in the ventrolateral medulla responsible for inspiration during respiratory activity. Functionally, induces an itch response through activation of receptors present on mast cells, triggering mast cell degranulation. The protein is Gastrin-releasing peptide (GRP) of Homo sapiens (Human).